The primary structure comprises 287 residues: Aquaporin PIP1-2 (287 aa).

The interval 1–37 (MEGKEEDVRLGANKFTERQPIGTAAQSQDKDYKEPPP) is disordered. Over 1–55 (MEGKEEDVRLGANKFTERQPIGTAAQSQDKDYKEPPPAPLFEPGELSSWSFYRAG) the chain is Cytoplasmic. Residues 56 to 76 (IAEFVATFLFLYITILTVMGV) form a helical membrane-spanning segment. Over 77-89 (VKSSTKCSTVGIQ) the chain is Extracellular. The helical transmembrane segment at 90 to 110 (GIAWAFGGMIFALVYCTAGIS) threads the bilayer. The Cytoplasmic segment spans residues 111-133 (GGHINPAVTFGLFLARKLSLTRA). Positions 115-117 (NPA) match the NPA 1 motif. The helical transmembrane segment at 134-154 (LFYMVMQCLGAICGAGVVKGF) threads the bilayer. The Extracellular portion of the chain corresponds to 155–175 (QKGLYENNGGGANVVAPGYTK). The chain crosses the membrane as a helical span at residues 176–196 (GDGLGAEIVGTFILVYTVFSA). At 197–209 (TDAKRSARDSHVP) the chain is on the cytoplasmic side. A helical transmembrane segment spans residues 210 to 230 (ILAPLPIGFAVFLVHLATIPI). The Extracellular portion of the chain corresponds to 231–257 (TGTGINPARSLGAAIIYNKGHAWDDHW). The NPA 2 signature appears at 236-238 (NPA). The helical transmembrane segment at 258 to 278 (IFWVGPFIGAALAALYHQVVI) threads the bilayer. Residues 279 to 287 (RAIPFKSRS) lie on the Cytoplasmic side of the membrane.

The protein belongs to the MIP/aquaporin (TC 1.A.8) family. PIP (TC 1.A.8.11) subfamily. Barely detectable in roots, leaves and fruits.

The protein resides in the cell membrane. Functionally, water channel required to facilitate the transport of water across cell membrane; mercury-insensitive. Contributes to the tolerance to multiple abiotic stresses including salt (NaCl), cold and water deprivation, by modulating cytosolic K(+)/Na(+) ratio, maintaining osmotic balance, and reducing membrane injury (e.g. oxidative injury). This chain is Aquaporin PIP1-2, found in Musa acuminata subsp. malaccensis (Wild banana).